Reading from the N-terminus, the 714-residue chain is Mitochondrial potassium channel ATP-binding subunit (714 aa).

The N-terminal 25 residues, M1–F25, are a transit peptide targeting the mitochondrion. 4 helical membrane-spanning segments follow: residues L127–I147, I178–L198, L278–L298, and N365–G385. In terms of domain architecture, ABC transmembrane type-1 spans L132–R419. Positions I454 to R691 constitute an ABC transporter domain. G489–T496 contacts ATP.

This sequence belongs to the ABC transporter superfamily. ABCB family. Multidrug resistance exporter (TC 3.A.1.201) subfamily. The mitochondrial potassium channel (mitoK(ATP)) is composed of 4 subunits of CCDC51/MITOK and 4 subunits of ABCB8/MITOSUR. Physically interacts with PAAT. Interacts with Neuropilin-1 (NRP1) in mitochondria. Strong expression is found in the heart, brain and testis. In the testis, expressed both in the somatic Sertoli cells and peritubular cells and in the germline (spermatogonia and pachytene spermatocytes). Also expressed in the lung, liver, intestine and kidney.

The protein resides in the mitochondrion inner membrane. Channel activity inhibited by ATP via ABCB8/MITOSUR subunit. ATP-binding subunit of the mitochondrial ATP-gated potassium channel (mitoK(ATP)). v. An increase in ATP intracellular levels closes the channel, inhibiting K(+) transport, whereas a decrease in ATP levels enhances K(+) uptake in the mitochondrial matrix. Plays a role in mitochondrial iron transport. Required for maintenance of normal cardiac function, possibly by influencing mitochondrial iron export and regulating the maturation of cytosolic iron sulfur cluster-containing enzymes. The chain is Mitochondrial potassium channel ATP-binding subunit from Rattus norvegicus (Rat).